Consider the following 267-residue polypeptide: Indole-3-glycerol phosphate synthase 1 (267 aa).

It belongs to the TrpC family.

It carries out the reaction 1-(2-carboxyphenylamino)-1-deoxy-D-ribulose 5-phosphate + H(+) = (1S,2R)-1-C-(indol-3-yl)glycerol 3-phosphate + CO2 + H2O. The protein operates within amino-acid biosynthesis; L-tryptophan biosynthesis; L-tryptophan from chorismate: step 4/5. The chain is Indole-3-glycerol phosphate synthase 1 (trpC1) from Ralstonia nicotianae (strain ATCC BAA-1114 / GMI1000) (Ralstonia solanacearum).